Here is a 1037-residue protein sequence, read N- to C-terminus: Guanine nucleotide-binding protein G(s) subunit alpha isoforms XLas (1037 aa).

Disordered stretches follow at residues 1-105, 185-224, 283-588, and 640-666; these read MGVR…MPFE, APGG…EETM, SPSQ…TSGC, and PLAE…KKRS. The segment covering 33-46 has biased composition (low complexity); the sequence is APGAAAPGAGPSPA. The span at 343–354 shows a compositional bias: basic and acidic residues; the sequence is PDKRERAERPPV. Composition is skewed to low complexity over residues 361–408 and 416–521; these read MEGA…GATP and APAD…PASG. Positions 553–565 are enriched in basic and acidic residues; the sequence is GKSESSRGRRVYY. Acidic residues predominate over residues 572-583; that stretch reads SDDDSSGDESDD. A compositionally biased stretch (basic and acidic residues) spans 640–660; the sequence is PLAEKRRQMRKEALEKRAQKR. A coiled-coil region spans residues 641–667; sequence LAEKRRQMRKEALEKRAQKRAEKKRSK. The G-alpha domain maps to 682 to 1037; that stretch reads CTHRLLLLGA…RMHLRQYELL (356 aa). The interval 685 to 698 is G1 motif; it reads RLLLLGAGESGKST. Position 690–698 (690–698) interacts with GTP; that stretch reads GAGESGKST. S697 contacts Mg(2+). Residues 711–734 are disordered; the sequence is FNGEGGEEDPQAARSNSDGEKATK. Residues 730-756 are a coiled coil; the sequence is EKATKVQDIKNNLKEAIETIVAAMSNL. The interval 839–847 is G2 motif; sequence DLLRCRVLT. Residues 840-847, 866-870, and 935-938 each bind GTP; these read LLRCRVLT, DVGGQ, and NKQD. R844 is modified (ADP-ribosylarginine; by cholera toxin). Position 847 (T847) interacts with Mg(2+). The interval 862 to 871 is G3 motif; it reads FHMFDVGGQR. The segment at 931-938 is G4 motif; the sequence is ILFLNKQD. S995 bears the Phosphoserine mark. Positions 1007 to 1012 are G5 motif; it reads TCAVDT. A1009 serves as a coordination point for GTP.

Belongs to the G-alpha family. G(s) subfamily. G proteins are composed of 3 units; alpha, beta and gamma. The alpha chain contains the guanine nucleotide binding site. Interacts through its N-terminal region with ALEX which is produced from the same locus in a different open reading frame. This interaction may inhibit its adenylyl cyclase-stimulating activity. Interacts with MAGED2.

Its subcellular location is the cell membrane. The protein localises to the apical cell membrane. The catalysed reaction is GTP + H2O = GDP + phosphate + H(+). Guanine nucleotide-binding proteins (G proteins) function as transducers in numerous signaling pathways controlled by G protein-coupled receptors (GPCRs). The alpha chain contains the guanine nucleotide binding site and alternates between an active, GTP-bound state and an inactive, GDP-bound state. Signaling by an activated GPCR promotes GDP release and GTP binding. The alpha subunit has a low GTPase activity that converts bound GTP to GDP, thereby terminating the signal. Both GDP release and GTP hydrolysis are modulated by numerous regulatory proteins. Signaling involves the activation of adenylyl cyclases, resulting in increased levels of the signaling molecule cAMP. GNAS functions downstream of several GPCRs, including beta-adrenergic receptors. XLas isoforms interact with the same set of receptors as Gnas isoforms. This Homo sapiens (Human) protein is Guanine nucleotide-binding protein G(s) subunit alpha isoforms XLas (GNAS).